A 312-amino-acid chain; its full sequence is DNA-directed RNA polymerase subunit alpha (312 aa).

The tract at residues 1–229 (MLQYQIDRIE…ELFQPLATVT (229 aa)) is alpha N-terminal domain (alpha-NTD). The tract at residues 245 to 312 (QIPLEELNLS…ISIPQSRTSA (68 aa)) is alpha C-terminal domain (alpha-CTD).

The protein belongs to the RNA polymerase alpha chain family. In cyanobacteria the RNAP catalytic core is composed of 2 alpha, 1 beta, 1 beta', 1 gamma and 1 omega subunit. When a sigma factor is associated with the core the holoenzyme is formed, which can initiate transcription.

The enzyme catalyses RNA(n) + a ribonucleoside 5'-triphosphate = RNA(n+1) + diphosphate. In terms of biological role, DNA-dependent RNA polymerase catalyzes the transcription of DNA into RNA using the four ribonucleoside triphosphates as substrates. This chain is DNA-directed RNA polymerase subunit alpha, found in Prochlorococcus marinus (strain MIT 9313).